The chain runs to 471 residues: Putative multidrug resistance protein MdtD (471 aa).

At 1 to 11 (MTDLPDSTRWQ) the chain is on the periplasmic side. The chain crosses the membrane as a helical span at residues 12–32 (LWIVAFGFFMQSLDTTIVNTA). At 33–48 (LPSMAQSLGESPLHMH) the chain is on the cytoplasmic side. A helical membrane pass occupies residues 49–69 (MVIVSYVLTVAVMLPASGWLA). At 70-76 (DKVGVRN) the chain is on the periplasmic side. Residues 77–97 (IFFTAIVLFTLGSLFCALSGT) traverse the membrane as a helical segment. Residues 98 to 101 (LNEL) lie on the Cytoplasmic side of the membrane. Residues 102–124 (LLARALQGVGGAMMVPVGRLTVM) traverse the membrane as a helical segment. Topologically, residues 125–137 (KIVPREQYMAAMT) are periplasmic. The helical transmembrane segment at 138–158 (FVTLPGQVGPLLGPALGGLLV) threads the bilayer. The Cytoplasmic portion of the chain corresponds to 159–164 (EYASWH). Residues 165 to 185 (WIFLINIPVGIIGAIATLMLM) traverse the membrane as a helical segment. The Periplasmic segment spans residues 186–196 (PNYTMQTRRFD). Residues 197–217 (LSGFLLLAVGMAVLTLALDGS) form a helical membrane-spanning segment. At 218–224 (KGTGLSP) the chain is on the cytoplasmic side. A helical membrane pass occupies residues 225–245 (LAIAGLVAVGVVALVLYLLHA). Topologically, residues 246 to 262 (RNNNRALFSLKLFRTRT) are periplasmic. The helical transmembrane segment at 263-283 (FSLGLAGSFAGRIGSGMLPFM) threads the bilayer. Over 284–285 (TP) the chain is Cytoplasmic. Residues 286-306 (VFLQIGLGFSPFHAGLMMIPM) traverse the membrane as a helical segment. The Periplasmic portion of the chain corresponds to 307 to 341 (VLGSMGMKRIVVQVVNRFGYRRVLVATTLGLSLVT). Residues 342-362 (LLFMTTALLGWYYVLPFVLFL) traverse the membrane as a helical segment. Over 363-395 (QGMVNSTRFSSMNTLTLKDLPDNLASSGNSLLS) the chain is Cytoplasmic. Residues 396–416 (MIMQLSMSIGVTIAGLLLGLF) traverse the membrane as a helical segment. At 417 to 430 (GSQHVSVDSGTTQT) the chain is on the periplasmic side. A helical transmembrane segment spans residues 431–451 (VFMYTWLSMAFIIALPAFIFA). The Cytoplasmic portion of the chain corresponds to 452–471 (RVPNDTHQNVAISRRKRSAQ).

Belongs to the major facilitator superfamily. TCR/Tet family.

Its subcellular location is the cell inner membrane. This Escherichia coli (strain SMS-3-5 / SECEC) protein is Putative multidrug resistance protein MdtD.